Here is a 579-residue protein sequence, read N- to C-terminus: Laccase-24 (579 aa).

The signal sequence occupies residues 1–23 (MARSWSLLLLPFALALVASVAQA). Plastocyanin-like domains lie at 31-148 (NVGN…PRGG) and 159-322 (EEVV…YGGG). N-linked (GlcNAc...) asparagine glycans are attached at residues Asn34 and Asn78. Residues His82 and His84 each contribute to the Cu cation site. Asn110 and Asn116 each carry an N-linked (GlcNAc...) asparagine glycan. Cu cation is bound by residues His127 and His129. N-linked (GlcNAc...) asparagine glycans are attached at residues Asn204, Asn209, Asn219, Asn241, Asn312, Asn337, Asn348, Asn398, Asn405, Asn444, and Asn462. The Plastocyanin-like 3 domain occupies 425-563 (DFPDTPPIVF…GMVFEVQNGP (139 aa)). Cu cation is bound by residues His480, His483, and His485. An N-linked (GlcNAc...) asparagine glycan is attached at Asn500. Cu cation contacts are provided by His542, Cys543, His544, and His548.

This sequence belongs to the multicopper oxidase family. Cu cation is required as a cofactor.

It localises to the secreted. The protein resides in the extracellular space. It is found in the apoplast. It carries out the reaction 4 hydroquinone + O2 = 4 benzosemiquinone + 2 H2O. In terms of biological role, lignin degradation and detoxification of lignin-derived products. The sequence is that of Laccase-24 (LAC24) from Oryza sativa subsp. japonica (Rice).